The sequence spans 246 residues: Large ribosomal subunit protein uL3 (246 aa).

Gln-151 is modified (N5-methylglutamine).

It belongs to the universal ribosomal protein uL3 family. As to quaternary structure, part of the 50S ribosomal subunit. Forms a cluster with proteins L14 and L19. Methylated by PrmB.

One of the primary rRNA binding proteins, it binds directly near the 3'-end of the 23S rRNA, where it nucleates assembly of the 50S subunit. The sequence is that of Large ribosomal subunit protein uL3 from Bartonella bacilliformis (strain ATCC 35685 / KC583 / Herrer 020/F12,63).